We begin with the raw amino-acid sequence, 198 residues long: Phosphoheptose isomerase (198 aa).

In terms of domain architecture, SIS spans 36–195 (AIEVYQNGNK…EEAIFRNKFV (160 aa)). Residue 51-53 (NGG) coordinates substrate. Residues H60 and E64 each contribute to the Zn(2+) site. Residues E64, 93–94 (ND), 119–121 (STS), S124, and Q171 contribute to the substrate site. 2 residues coordinate Zn(2+): Q171 and H179.

The protein belongs to the SIS family. GmhA subfamily. The cofactor is Zn(2+).

It localises to the cytoplasm. It catalyses the reaction 2 D-sedoheptulose 7-phosphate = D-glycero-alpha-D-manno-heptose 7-phosphate + D-glycero-beta-D-manno-heptose 7-phosphate. It participates in carbohydrate biosynthesis; D-glycero-D-manno-heptose 7-phosphate biosynthesis; D-glycero-alpha-D-manno-heptose 7-phosphate and D-glycero-beta-D-manno-heptose 7-phosphate from sedoheptulose 7-phosphate: step 1/1. It functions in the pathway cell surface structure biogenesis; S-layer biogenesis. Its function is as follows. Catalyzes the isomerization of sedoheptulose 7-phosphate in D-glycero-D-manno-heptose 7-phosphate. This Aneurinibacillus thermoaerophilus protein is Phosphoheptose isomerase.